A 214-amino-acid chain; its full sequence is MTGTVTSVRQPPEWAAVTIVAAGQRMDARGWVPATAGNISVRLPDDTIAITSSGNHKGFLKTSDIMVVDQAGKPLTPGLKPSAETLLHCQIYRLDNQAGAVVHGHSVAATVLSMAPGKNDAPPDFIRLEGYEVLKAFGVKTHQITLDLPILDNDQDMERLASIAEPILLRGAPLGYLIRGHGVYVWGGDMAAALARLEGLEFLLACELERRRLR.

Zn(2+) is bound by residues His-103 and His-105.

It belongs to the aldolase class II family. MtnB subfamily. Requires Zn(2+) as cofactor.

The enzyme catalyses 5-(methylsulfanyl)-D-ribulose 1-phosphate = 5-methylsulfanyl-2,3-dioxopentyl phosphate + H2O. The protein operates within amino-acid biosynthesis; L-methionine biosynthesis via salvage pathway; L-methionine from S-methyl-5-thio-alpha-D-ribose 1-phosphate: step 2/6. Its function is as follows. Catalyzes the dehydration of methylthioribulose-1-phosphate (MTRu-1-P) into 2,3-diketo-5-methylthiopentyl-1-phosphate (DK-MTP-1-P). This Granulibacter bethesdensis (strain ATCC BAA-1260 / CGDNIH1) protein is Methylthioribulose-1-phosphate dehydratase.